The chain runs to 460 residues: UDP-N-acetylmuramate--L-alanine ligase (460 aa).

112-118 (GTHGKTT) contributes to the ATP binding site.

This sequence belongs to the MurCDEF family.

The protein localises to the cytoplasm. It carries out the reaction UDP-N-acetyl-alpha-D-muramate + L-alanine + ATP = UDP-N-acetyl-alpha-D-muramoyl-L-alanine + ADP + phosphate + H(+). The protein operates within cell wall biogenesis; peptidoglycan biosynthesis. Cell wall formation. The sequence is that of UDP-N-acetylmuramate--L-alanine ligase from Pelobacter propionicus (strain DSM 2379 / NBRC 103807 / OttBd1).